A 953-amino-acid chain; its full sequence is Zinc finger protein 507 (953 aa).

Ser-95 is modified (phosphoserine). 3 consecutive C2H2-type zinc fingers follow at residues 125 to 147 (YQCSLCKFLSSSFSVLKDHIKQH), 155 to 185 (LMCSECHITSRSQEELEAHVVNDHDNDANIH), and 248 to 270 (YRCLFCSYTCGQQRMLKTHAWKH). Ser-427 carries the post-translational modification Phosphoserine. Residues 470-489 (KGLATDENAPPGRRRTNSES) are disordered. 5 C2H2-type zinc fingers span residues 641-663 (YRCRLCHYTSGNKGYIKQHLRVH), 669-691 (YQCPICEHIADNSKDLESHMIHH), 697-720 (YQCKQCEESFHYKSQLRNHEREQH), 758-780 (YRCDVCDYTSTTYVGVRNHRRIH), and 786-808 (YRCSLCGYVCSHPPSLKSHMWKH). The tract at residues 831 to 888 (GRVLGKSPGKTQLKSSEESADPVTGSSENAVSSSELMSQTPSEVLGTNENEKLSPTSN) is disordered. Residues 854-888 (TGSSENAVSSSELMSQTPSEVLGTNENEKLSPTSN) show a composition bias toward polar residues. The segment at 911–933 (FCCCICGFESTSKENLLDHMKEH) adopts a C2H2-type 9 zinc-finger fold.

This sequence belongs to the krueppel C2H2-type zinc-finger protein family.

The protein localises to the nucleus. May be involved in transcriptional regulation. The polypeptide is Zinc finger protein 507 (ZNF507) (Homo sapiens (Human)).